Reading from the N-terminus, the 136-residue chain is Small ribosomal subunit protein eS6 (136 aa).

It belongs to the eukaryotic ribosomal protein eS6 family.

This is Small ribosomal subunit protein eS6 from Methanosarcina acetivorans (strain ATCC 35395 / DSM 2834 / JCM 12185 / C2A).